Consider the following 385-residue polypeptide: Endoglucanase 1 (385 aa).

The first 17 residues, 1–17 (MKLVFSALASLLSGASA), serve as a signal peptide directing secretion. N-linked (GlcNAc...) asparagine glycans are attached at residues Asn93 and Asn140. Glu176 functions as the Proton donor in the catalytic mechanism. Residues Asn200 and Asn237 are each glycosylated (N-linked (GlcNAc...) asparagine). Glu284 functions as the Nucleophile in the catalytic mechanism. N-linked (GlcNAc...) asparagine glycosylation is found at Asn289 and Asn331.

It belongs to the glycosyl hydrolase 5 (cellulase A) family.

The enzyme catalyses Endohydrolysis of (1-&gt;4)-beta-D-glucosidic linkages in cellulose, lichenin and cereal beta-D-glucans.. It functions in the pathway glycan metabolism; cellulose degradation. Functionally, active towards carboxymethyl cellulose. The polypeptide is Endoglucanase 1 (eg 1) (Robillarda sp. (strain Y-20)).